The sequence spans 197 residues: Recombination protein RecR (197 aa).

Residues 56-71 form a C4-type zinc finger; sequence CSVCGNFDTIDPCAIC. The Toprim domain maps to 79 to 174; it reads SMLCVVEDVA…TVSGLAHGVP (96 aa).

The protein belongs to the RecR family.

Its function is as follows. May play a role in DNA repair. It seems to be involved in an RecBC-independent recombinational process of DNA repair. It may act with RecF and RecO. This is Recombination protein RecR from Paramagnetospirillum magneticum (strain ATCC 700264 / AMB-1) (Magnetospirillum magneticum).